Reading from the N-terminus, the 159-residue chain is 2-C-methyl-D-erythritol 2,4-cyclodiphosphate synthase (159 aa).

A divalent metal cation contacts are provided by D8 and H10. Residues 8-10 (DVH) and 34-35 (HS) each bind 4-CDP-2-C-methyl-D-erythritol 2-phosphate. H42 lines the a divalent metal cation pocket. 4-CDP-2-C-methyl-D-erythritol 2-phosphate is bound by residues 56–58 (DIG), 61–65 (FPDTD), 100–106 (AQAPKML), 132–135 (TTTE), F139, and R142.

It belongs to the IspF family. Homotrimer. It depends on a divalent metal cation as a cofactor.

The enzyme catalyses 4-CDP-2-C-methyl-D-erythritol 2-phosphate = 2-C-methyl-D-erythritol 2,4-cyclic diphosphate + CMP. The protein operates within isoprenoid biosynthesis; isopentenyl diphosphate biosynthesis via DXP pathway; isopentenyl diphosphate from 1-deoxy-D-xylulose 5-phosphate: step 4/6. Involved in the biosynthesis of isopentenyl diphosphate (IPP) and dimethylallyl diphosphate (DMAPP), two major building blocks of isoprenoid compounds. Catalyzes the conversion of 4-diphosphocytidyl-2-C-methyl-D-erythritol 2-phosphate (CDP-ME2P) to 2-C-methyl-D-erythritol 2,4-cyclodiphosphate (ME-CPP) with a corresponding release of cytidine 5-monophosphate (CMP). The sequence is that of 2-C-methyl-D-erythritol 2,4-cyclodiphosphate synthase from Salmonella typhi.